The following is a 749-amino-acid chain: Transcription factor RFX3 (749 aa).

Residues His183–Pro258 constitute a DNA-binding region (RFX-type winged-helix).

Belongs to the RFX family.

It localises to the nucleus. Transcription factor required for ciliogenesis and islet cell differentiation during endocrine pancreas development. The chain is Transcription factor RFX3 (rfx3) from Xenopus tropicalis (Western clawed frog).